The sequence spans 232 residues: 7-cyano-7-deazaguanine synthase (232 aa).

8-18 is an ATP binding site; it reads FSGGQDSTTCL. Zn(2+) is bound by residues cysteine 189, cysteine 198, cysteine 201, and cysteine 204.

This sequence belongs to the QueC family. Zn(2+) is required as a cofactor.

It catalyses the reaction 7-carboxy-7-deazaguanine + NH4(+) + ATP = 7-cyano-7-deazaguanine + ADP + phosphate + H2O + H(+). The protein operates within purine metabolism; 7-cyano-7-deazaguanine biosynthesis. Catalyzes the ATP-dependent conversion of 7-carboxy-7-deazaguanine (CDG) to 7-cyano-7-deazaguanine (preQ(0)). The sequence is that of 7-cyano-7-deazaguanine synthase from Serratia proteamaculans (strain 568).